The following is a 270-amino-acid chain: Undecaprenyl-diphosphatase 1 (270 aa).

6 helical membrane passes run 41 to 61 (IEGF…VLLV), 88 to 108 (FRFI…GVLF), 117 to 137 (KDGV…LFLI), 192 to 212 (FSFL…ITDI), 218 to 238 (LGEL…ATYF), and 250 to 270 (GNLV…LIFA).

This sequence belongs to the UppP family.

It localises to the cell membrane. It carries out the reaction di-trans,octa-cis-undecaprenyl diphosphate + H2O = di-trans,octa-cis-undecaprenyl phosphate + phosphate + H(+). Its function is as follows. Catalyzes the dephosphorylation of undecaprenyl diphosphate (UPP). Confers resistance to bacitracin. This is Undecaprenyl-diphosphatase 1 from Bacillus licheniformis (strain ATCC 14580 / DSM 13 / JCM 2505 / CCUG 7422 / NBRC 12200 / NCIMB 9375 / NCTC 10341 / NRRL NRS-1264 / Gibson 46).